We begin with the raw amino-acid sequence, 182 residues long: Peptidyl-tRNA hydrolase (182 aa).

Tyr14 contributes to the tRNA binding site. The active-site Proton acceptor is the His19. TRNA contacts are provided by Phe64, Asn66, and Asn112.

Belongs to the PTH family. As to quaternary structure, monomer.

Its subcellular location is the cytoplasm. It carries out the reaction an N-acyl-L-alpha-aminoacyl-tRNA + H2O = an N-acyl-L-amino acid + a tRNA + H(+). Hydrolyzes ribosome-free peptidyl-tRNAs (with 1 or more amino acids incorporated), which drop off the ribosome during protein synthesis, or as a result of ribosome stalling. In terms of biological role, catalyzes the release of premature peptidyl moieties from peptidyl-tRNA molecules trapped in stalled 50S ribosomal subunits, and thus maintains levels of free tRNAs and 50S ribosomes. This chain is Peptidyl-tRNA hydrolase, found in Wolbachia pipientis wMel.